The following is a 314-amino-acid chain: Hydroxyethylthiazole kinase (314 aa).

Residue methionine 70 participates in substrate binding. Arginine 145 and serine 217 together coordinate ATP. Glycine 244 is a substrate binding site.

Belongs to the Thz kinase family. Requires Mg(2+) as cofactor.

The catalysed reaction is 5-(2-hydroxyethyl)-4-methylthiazole + ATP = 4-methyl-5-(2-phosphooxyethyl)-thiazole + ADP + H(+). It functions in the pathway cofactor biosynthesis; thiamine diphosphate biosynthesis; 4-methyl-5-(2-phosphoethyl)-thiazole from 5-(2-hydroxyethyl)-4-methylthiazole: step 1/1. Its function is as follows. Catalyzes the phosphorylation of the hydroxyl group of 4-methyl-5-beta-hydroxyethylthiazole (THZ). The sequence is that of Hydroxyethylthiazole kinase from Bifidobacterium longum (strain NCC 2705).